The sequence spans 232 residues: Ribose-5-phosphate isomerase A (232 aa).

Substrate is bound by residues 28 to 31 (TGST), 83 to 86 (DGAD), and 96 to 99 (KGGG). The Proton acceptor role is filled by E105. K123 contacts substrate.

Belongs to the ribose 5-phosphate isomerase family. In terms of assembly, homodimer.

The catalysed reaction is aldehydo-D-ribose 5-phosphate = D-ribulose 5-phosphate. It participates in carbohydrate degradation; pentose phosphate pathway; D-ribose 5-phosphate from D-ribulose 5-phosphate (non-oxidative stage): step 1/1. Catalyzes the reversible conversion of ribose-5-phosphate to ribulose 5-phosphate. The chain is Ribose-5-phosphate isomerase A from Rhizobium etli (strain ATCC 51251 / DSM 11541 / JCM 21823 / NBRC 15573 / CFN 42).